A 333-amino-acid polypeptide reads, in one-letter code: Holliday junction branch migration complex subunit RuvB (333 aa).

The tract at residues 1–182 (MDERLLSGES…FGVLSRLEYY (182 aa)) is large ATPase domain (RuvB-L). ATP contacts are provided by residues Leu-21, Arg-22, Gly-63, Lys-66, Thr-67, Thr-68, 129–131 (EDF), Arg-172, Tyr-182, and Arg-219. Mg(2+) is bound at residue Thr-67. Residues 183–253 (TVDQLSAIVE…ITQMALELLQ (71 aa)) form a small ATPAse domain (RuvB-S) region. The interval 256-333 (KLGLDHIDHK…EHFGMEMPKV (78 aa)) is head domain (RuvB-H). Residues Arg-311 and Arg-316 each contribute to the DNA site.

Belongs to the RuvB family. Homohexamer. Forms an RuvA(8)-RuvB(12)-Holliday junction (HJ) complex. HJ DNA is sandwiched between 2 RuvA tetramers; dsDNA enters through RuvA and exits via RuvB. An RuvB hexamer assembles on each DNA strand where it exits the tetramer. Each RuvB hexamer is contacted by two RuvA subunits (via domain III) on 2 adjacent RuvB subunits; this complex drives branch migration. In the full resolvosome a probable DNA-RuvA(4)-RuvB(12)-RuvC(2) complex forms which resolves the HJ.

Its subcellular location is the cytoplasm. The enzyme catalyses ATP + H2O = ADP + phosphate + H(+). The RuvA-RuvB-RuvC complex processes Holliday junction (HJ) DNA during genetic recombination and DNA repair, while the RuvA-RuvB complex plays an important role in the rescue of blocked DNA replication forks via replication fork reversal (RFR). RuvA specifically binds to HJ cruciform DNA, conferring on it an open structure. The RuvB hexamer acts as an ATP-dependent pump, pulling dsDNA into and through the RuvAB complex. RuvB forms 2 homohexamers on either side of HJ DNA bound by 1 or 2 RuvA tetramers; 4 subunits per hexamer contact DNA at a time. Coordinated motions by a converter formed by DNA-disengaged RuvB subunits stimulates ATP hydrolysis and nucleotide exchange. Immobilization of the converter enables RuvB to convert the ATP-contained energy into a lever motion, pulling 2 nucleotides of DNA out of the RuvA tetramer per ATP hydrolyzed, thus driving DNA branch migration. The RuvB motors rotate together with the DNA substrate, which together with the progressing nucleotide cycle form the mechanistic basis for DNA recombination by continuous HJ branch migration. Branch migration allows RuvC to scan DNA until it finds its consensus sequence, where it cleaves and resolves cruciform DNA. This is Holliday junction branch migration complex subunit RuvB from Bacillus cereus (strain Q1).